The sequence spans 659 residues: UvrABC system protein B (659 aa).

Residues 25 to 414 (EGVRRGAREQ…PSLVVEQIVR (390 aa)) form the Helicase ATP-binding domain. ATP is bound at residue 38–45 (GATGTGKT). Positions 91-114 (YYDYYQPEAYIPTTDTYIEKDALI) match the Beta-hairpin motif. The Helicase C-terminal domain occupies 431 to 597 (QIDDLYAEIR…TIVKPVRDVI (167 aa)). Residues 620–655 (PKVVAKLRKEMMQAAKDLDFERAAEIRDIIFELEKK) form the UVR domain.

The protein belongs to the UvrB family. In terms of assembly, forms a heterotetramer with UvrA during the search for lesions. Interacts with UvrC in an incision complex.

It is found in the cytoplasm. The UvrABC repair system catalyzes the recognition and processing of DNA lesions. A damage recognition complex composed of 2 UvrA and 2 UvrB subunits scans DNA for abnormalities. Upon binding of the UvrA(2)B(2) complex to a putative damaged site, the DNA wraps around one UvrB monomer. DNA wrap is dependent on ATP binding by UvrB and probably causes local melting of the DNA helix, facilitating insertion of UvrB beta-hairpin between the DNA strands. Then UvrB probes one DNA strand for the presence of a lesion. If a lesion is found the UvrA subunits dissociate and the UvrB-DNA preincision complex is formed. This complex is subsequently bound by UvrC and the second UvrB is released. If no lesion is found, the DNA wraps around the other UvrB subunit that will check the other stand for damage. The sequence is that of UvrABC system protein B from Symbiobacterium thermophilum (strain DSM 24528 / JCM 14929 / IAM 14863 / T).